Here is a 704-residue protein sequence, read N- to C-terminus: Ion-translocating oxidoreductase complex subunit C (704 aa).

4Fe-4S ferredoxin-type domains lie at 368–397 (MGAP…QQLY) and 407–436 (KATA…VQYF). The [4Fe-4S] cluster site is built by cysteine 377, cysteine 380, cysteine 383, cysteine 387, cysteine 416, cysteine 419, cysteine 422, and cysteine 426. A disordered region spans residues 536 to 684 (RAKQAAHPMA…PADPRKAAVA (149 aa)). Residues 556–565 (KAAVEAAIAR) show a composition bias toward low complexity.

This sequence belongs to the 4Fe4S bacterial-type ferredoxin family. RnfC subfamily. As to quaternary structure, the complex is composed of six subunits: RsxA, RsxB, RsxC, RsxD, RsxE and RsxG. [4Fe-4S] cluster serves as cofactor.

Its subcellular location is the cell inner membrane. Functionally, part of a membrane-bound complex that couples electron transfer with translocation of ions across the membrane. Required to maintain the reduced state of SoxR. This is Ion-translocating oxidoreductase complex subunit C from Salmonella choleraesuis (strain SC-B67).